The following is a 1243-amino-acid chain: Membrane-associated phosphatidylinositol transfer protein 1 (1243 aa).

A phosphothreonine mark is found at Thr59, Thr282, and Thr287. The disordered stretch occupies residues 259 to 330 (CNTGSEGPEA…HGGGVSPQSL (72 aa)). Positions 271 to 283 (PGKSSTEARPGTS) are enriched in polar residues. Residues 299 to 319 (ASPDASFGKQWSSSSRSSYSS) show a composition bias toward low complexity. Ser300, Ser304, Ser319, Ser326, Ser329, Ser342, Ser345, Ser346, and Ser373 each carry phosphoserine. Ser382 carries the post-translational modification Phosphoserine; by CDK1. Positions 581-593 (AGPGSRGSSRRGS) are enriched in low complexity. Positions 581–679 (AGPGSRGSSR…PASSEAPDGP (99 aa)) are disordered. A phosphoserine mark is found at Ser593, Ser600, and Ser621. A compositionally biased stretch (polar residues) spans 643 to 658 (GSQNSLQVASTATSSG). The region spanning 684–878 (RLDFKVSGFF…VVAFILRQVI (195 aa)) is the DDHD domain. At Ser895 the chain carries Phosphoserine. The interval 1206-1243 (LLRSRGPSQVDREGPGTPPTTLARGKTRSISLKLDSEE) is disordered. 2 positions are modified to omega-N-methylarginine: Arg1210 and Arg1217. At Ser1236 the chain carries Phosphoserine.

Belongs to the PtdIns transfer protein family. PI transfer class IIA subfamily. In terms of assembly, interacts with PTK2B via its C-terminus. Interacts with RHOA. Has higher affinity for the inactive, GDP-bound form of RHOA. The CDK1-phosphorylated form interacts with PLK1. Interacts with VAPB and PIK4CA. Post-translationally, phosphorylated on multiple sites by CDK1 at the onset of mitosis. Phosphorylation facilitates dissociation from the Golgi complex and is required for interaction with PLK1. Phosphorylated on threonine residues upon treatment with oleic acid. In terms of processing, phosphorylated on tyrosine residues by PTK2B. In terms of tissue distribution, detected at high levels in brain, and at lower levels in lung, kidney, spleen and liver (at protein level). Ubiquitous. Highly expressed in embryonic retina and the central nervous system.

Its subcellular location is the cytoplasm. It localises to the golgi apparatus. The protein localises to the golgi stack membrane. The protein resides in the endoplasmic reticulum membrane. It is found in the lipid droplet. Its subcellular location is the cleavage furrow. It localises to the midbody. The enzyme catalyses a 1,2-diacyl-sn-glycero-3-phospho-(1D-myo-inositol)(in) = a 1,2-diacyl-sn-glycero-3-phospho-(1D-myo-inositol)(out). Its function is as follows. Catalyzes the transfer of phosphatidylinositol (PI) between membranes. Binds PI. Also binds phosphatidylcholine (PC) and phosphatidic acid (PA) with the binding affinity order of PI &gt; PA &gt; PC. Regulates RHOA activity, and plays a role in cytoskeleton remodeling. Necessary for normal completion of cytokinesis. Plays a role in maintaining normal diacylglycerol levels in the Golgi apparatus. Necessary for maintaining the normal structure of the endoplasmic reticulum and the Golgi apparatus. Required for protein export from the endoplasmic reticulum and the Golgi. Binds calcium ions. This Mus musculus (Mouse) protein is Membrane-associated phosphatidylinositol transfer protein 1 (Pitpnm1).